We begin with the raw amino-acid sequence, 229 residues long: tRNA (guanine-N(7)-)-methyltransferase (229 aa).

The S-adenosyl-L-methionine site is built by Glu62, Glu87, Asp114, and Asp137. Asp137 is an active-site residue. Lys141 provides a ligand contact to substrate. Residues 143–148 (KHNKRR) are interaction with RNA. Substrate is bound by residues Asp173 and 208 to 211 (TKFE).

Belongs to the class I-like SAM-binding methyltransferase superfamily. TrmB family.

The enzyme catalyses guanosine(46) in tRNA + S-adenosyl-L-methionine = N(7)-methylguanosine(46) in tRNA + S-adenosyl-L-homocysteine. It functions in the pathway tRNA modification; N(7)-methylguanine-tRNA biosynthesis. In terms of biological role, catalyzes the formation of N(7)-methylguanine at position 46 (m7G46) in tRNA. The chain is tRNA (guanine-N(7)-)-methyltransferase from Francisella tularensis subsp. novicida (strain U112).